A 372-amino-acid polypeptide reads, in one-letter code: Tyrosine--tRNA ligase (372 aa).

Residues Y37, Y169, Q173, D176, and Q191 each coordinate L-tyrosine. Positions 246–250 (KMSKS) match the 'KMSKS' region motif. Residue K249 coordinates ATP.

The protein belongs to the class-I aminoacyl-tRNA synthetase family. TyrS type 4 subfamily. Homodimer.

The protein resides in the cytoplasm. It carries out the reaction tRNA(Tyr) + L-tyrosine + ATP = L-tyrosyl-tRNA(Tyr) + AMP + diphosphate + H(+). Catalyzes the attachment of tyrosine to tRNA(Tyr) in a two-step reaction: tyrosine is first activated by ATP to form Tyr-AMP and then transferred to the acceptor end of tRNA(Tyr). This Pyrobaculum calidifontis (strain DSM 21063 / JCM 11548 / VA1) protein is Tyrosine--tRNA ligase.